The chain runs to 130 residues: Abscisic acid and environmental stress-inducible protein TAS14 (130 aa).

The tract at residues 1–130 (MAQYGNQDQM…KIKDKIPGMH (130 aa)) is disordered. Positions 27–58 (QGTGTGGMMGGTGTGGMMGGTGGEYGTQGMGT) are enriched in gly residues. 2 stretches are compositionally biased toward basic and acidic residues: residues 61–73 (HHHE…RRSD) and 92–130 (KEKI…PGMH).

It belongs to the plant dehydrin family.

This chain is Abscisic acid and environmental stress-inducible protein TAS14 (TAS14), found in Solanum lycopersicum (Tomato).